Reading from the N-terminus, the 302-residue chain is Methionyl-tRNA formyltransferase (302 aa).

108 to 111 (SLLP) contributes to the (6S)-5,6,7,8-tetrahydrofolate binding site.

Belongs to the Fmt family.

It catalyses the reaction L-methionyl-tRNA(fMet) + (6R)-10-formyltetrahydrofolate = N-formyl-L-methionyl-tRNA(fMet) + (6S)-5,6,7,8-tetrahydrofolate + H(+). Its function is as follows. Attaches a formyl group to the free amino group of methionyl-tRNA(fMet). The formyl group appears to play a dual role in the initiator identity of N-formylmethionyl-tRNA by promoting its recognition by IF2 and preventing the misappropriation of this tRNA by the elongation apparatus. The polypeptide is Methionyl-tRNA formyltransferase (Nitratiruptor sp. (strain SB155-2)).